The following is a 202-amino-acid chain: 3-isopropylmalate dehydratase small subunit (202 aa).

It belongs to the LeuD family. LeuD type 1 subfamily. In terms of assembly, heterodimer of LeuC and LeuD.

The catalysed reaction is (2R,3S)-3-isopropylmalate = (2S)-2-isopropylmalate. It participates in amino-acid biosynthesis; L-leucine biosynthesis; L-leucine from 3-methyl-2-oxobutanoate: step 2/4. In terms of biological role, catalyzes the isomerization between 2-isopropylmalate and 3-isopropylmalate, via the formation of 2-isopropylmaleate. This chain is 3-isopropylmalate dehydratase small subunit, found in Rhizobium johnstonii (strain DSM 114642 / LMG 32736 / 3841) (Rhizobium leguminosarum bv. viciae).